We begin with the raw amino-acid sequence, 225 residues long: Riboflavin kinase (225 aa).

Positions 1 to 89 are unknown; that stretch reads MPDIEYLKKL…SRIFSSEPDT (89 aa). Residues 90–225 form a riboflavin kinase region; the sequence is LELEGNVLKG…LKKQGMEGQK (136 aa). 99–104 contacts CDP; the sequence is GLGEGQ. Mg(2+)-binding residues include Thr-128 and Asn-130. Positions 185 and 193 each coordinate FMN. 198-201 contacts CDP; the sequence is VKLR.

Belongs to the archaeal riboflavin kinase family. Mg(2+) serves as cofactor.

It carries out the reaction riboflavin + CTP = CDP + FMN + H(+). It functions in the pathway cofactor biosynthesis; FMN biosynthesis; FMN from riboflavin (CTP route): step 1/1. Its function is as follows. Catalyzes the CTP-dependent phosphorylation of riboflavin (vitamin B2) to form flavin mononucleotide (FMN). The protein is Riboflavin kinase (ribK) of Methanosarcina mazei (strain ATCC BAA-159 / DSM 3647 / Goe1 / Go1 / JCM 11833 / OCM 88) (Methanosarcina frisia).